We begin with the raw amino-acid sequence, 209 residues long: Ubiquitin-conjugating enzyme E2 S (209 aa).

Positions 14–160 (QTIRQVMREL…ARMMTEIHAQ (147 aa)) constitute a UBC core domain. Cys98 (glycyl thioester intermediate) is an active-site residue. Residues 165-209 (GVGATGDAKDDGGPSTKKHAGLDKKLQDKKKEKLLKEKKRMLKRL) are disordered. Residues 184-199 (AGLDKKLQDKKKEKLL) show a composition bias toward basic and acidic residues. Residues 200–209 (KEKKRMLKRL) are compositionally biased toward basic residues.

The protein belongs to the ubiquitin-conjugating enzyme family.

The catalysed reaction is S-ubiquitinyl-[E1 ubiquitin-activating enzyme]-L-cysteine + [E2 ubiquitin-conjugating enzyme]-L-cysteine = [E1 ubiquitin-activating enzyme]-L-cysteine + S-ubiquitinyl-[E2 ubiquitin-conjugating enzyme]-L-cysteine.. It functions in the pathway protein modification; protein ubiquitination. Functionally, catalyzes the covalent attachment of ubiquitin to other proteins. Acts as an essential factor of the anaphase promoting complex/cyclosome (APC/C), a cell cycle-regulated ubiquitin ligase that controls progression through mitosis. Acts by specifically elongating polyubiquitin chains initiated by the E2 enzyme vih/UbcH10 on APC/C substrates, enhancing the degradation of APC/C substrates by the proteasome and promoting mitotic exit. In Drosophila simulans (Fruit fly), this protein is Ubiquitin-conjugating enzyme E2 S.